Reading from the N-terminus, the 360-residue chain is Protein phosphatase 1 regulatory subunit 7 (360 aa).

The tract at residues Met-1–His-63 is disordered. Residue Ala-2 is modified to N-acetylalanine. 5 positions are modified to phosphoserine: Ser-12, Ser-24, Ser-27, Ser-44, and Ser-47. Over residues Glu-17 to Lys-34 the composition is skewed to basic and acidic residues. 11 LRR repeats span residues Asp-77–Lys-98, Lys-99–Gln-120, Ser-121–Thr-142, Glu-143–Thr-164, Gln-165–Gln-186, Gln-187–Thr-208, Asn-209–Ser-230, Asn-231–Val-252, Asn-253–Asn-274, Lys-275–Thr-296, and Glu-297–Lys-318. Position 322 is a phosphoserine (Ser-322). One can recognise an LRRCT domain in the interval Asn-331–Phe-360.

The protein belongs to the SDS22 family. Interacts with PPP1CA, PPP1CB and PPP1CC/PPP1G.

It is found in the nucleus. Regulatory subunit of protein phosphatase 1. This is Protein phosphatase 1 regulatory subunit 7 (Ppp1r7) from Rattus norvegicus (Rat).